The sequence spans 283 residues: Thymidylate synthase (283 aa).

R22 lines the dUMP pocket. The active-site Nucleophile is the C160. Residues 180 to 183, N191, and 221 to 223 contribute to the dUMP site; these read RSCD and HIY. A (6R)-5,10-methylene-5,6,7,8-tetrahydrofolate-binding site is contributed by D183. A (6R)-5,10-methylene-5,6,7,8-tetrahydrofolate-binding site is contributed by S282.

Belongs to the thymidylate synthase family. Bacterial-type ThyA subfamily. Homodimer.

It localises to the cytoplasm. The enzyme catalyses dUMP + (6R)-5,10-methylene-5,6,7,8-tetrahydrofolate = 7,8-dihydrofolate + dTMP. It functions in the pathway pyrimidine metabolism; dTTP biosynthesis. In terms of biological role, catalyzes the reductive methylation of 2'-deoxyuridine-5'-monophosphate (dUMP) to 2'-deoxythymidine-5'-monophosphate (dTMP) while utilizing 5,10-methylenetetrahydrofolate (mTHF) as the methyl donor and reductant in the reaction, yielding dihydrofolate (DHF) as a by-product. This enzymatic reaction provides an intracellular de novo source of dTMP, an essential precursor for DNA biosynthesis. This chain is Thymidylate synthase, found in Pasteurella multocida (strain Pm70).